Here is a 529-residue protein sequence, read N- to C-terminus: Bifunctional purine biosynthesis protein PurH (529 aa).

One can recognise an MGS-like domain in the interval 8 to 158 (PSAPDLVAPK…KNHGYVAVCT (151 aa)).

The protein belongs to the PurH family.

It catalyses the reaction (6R)-10-formyltetrahydrofolate + 5-amino-1-(5-phospho-beta-D-ribosyl)imidazole-4-carboxamide = 5-formamido-1-(5-phospho-D-ribosyl)imidazole-4-carboxamide + (6S)-5,6,7,8-tetrahydrofolate. The catalysed reaction is IMP + H2O = 5-formamido-1-(5-phospho-D-ribosyl)imidazole-4-carboxamide. It functions in the pathway purine metabolism; IMP biosynthesis via de novo pathway; 5-formamido-1-(5-phospho-D-ribosyl)imidazole-4-carboxamide from 5-amino-1-(5-phospho-D-ribosyl)imidazole-4-carboxamide (10-formyl THF route): step 1/1. Its pathway is purine metabolism; IMP biosynthesis via de novo pathway; IMP from 5-formamido-1-(5-phospho-D-ribosyl)imidazole-4-carboxamide: step 1/1. The protein is Bifunctional purine biosynthesis protein PurH of Caulobacter vibrioides (strain ATCC 19089 / CIP 103742 / CB 15) (Caulobacter crescentus).